Reading from the N-terminus, the 1381-residue chain is MKALAVLGPGLLVHLLTLVQKSGGECKEALVKSAMNVDMKYQLPNFTAETPIQNVVVHQHYIYLGAVNYIYVLNDTDLQKVAEYRTGPVLEHPECLPCQDCSHKANASGGVWADNVNMALLVDTYYDDQLISCGSVRRGTCRRHVLRSDAADIRSEVHCMFSPQADEEPGRCPDCVVSALGTKVLLSEKDRFINFFVGNTISSAHLPGRALHSISVRRLKETQDGFKFLTDQSYIDVLPEFRDSYPIKYVHAFESNHFIYFLTVQRETLDAQTFHTRIVRFCSVDSGLHSYVEMPLECILTEKRRRRSARSEVFNILQAAYVGKPGTHLANQIGVNLDDDILYAVFAQSKPDSAEPMNRSAVCAFPIKLVNEFFNKIVNKNNVRCLQHFYGPNHEPCFNRTLLRIPSGCEVRSDEYRTEFTTALQRVDLFMGQFNRVLLTSVSTFIAGDLTIANLGTSEGRFMQVVVFRSGSSTPHVNFRLDSHPVSPEMIVQHPLNQNGYTLVVTGKTITKIPLNGLGCEHFQSCSQCLSAPPFVQCGWCHNKCVRSEECPSGVWTQDVCHPTIYEVFPTTAPLEGGTTLTICGWDFGFRRNNKFDLKKTRILLGNESCTLTLSESTANTLKCTVGPAMSEHLNLSIIISSGRGTAQYTAFSYVDPIITSVSPSYGPKTGGTLLTLTGKYLNSGNSRHISIGGKTCSLKSVSESVLECYTPAQTTTTEFPIKLKIDLANRETNSFNYREDPIVDEIHPTKSFISGGSTITGVGKNLNSVSGLRMVISVREAGRNFTVACQHRSNSEIICCTTPSLQQLNLQLPLTTKAFFMLDGIHSKYFDLIYVHDPVFKLFEKPVMISIGNENVLEIKGNDIDPEAVKGEVLKVGNKSCENVHSHSEAVLCTVPSDLLKLNSELNIEWKQAVSSTILGKVIVQPDQNFTGLIVGVISISVLLSLLFGLFLWLKRRKQIKDLGSELVRYDARIHTPHLDRLVSARSISPTTEMVSNESVDYRATFPEDQFANSSQNGSCRQVQCPLMDLSPILPGGDSDISSPLLQNTVRIDLSALNPELVQAVQHVVIGPSRLIVHFNEVIGRGHFGCVYHGTLLDNDDKKIHCAVKSLNRITDIGEVSQFLTEGIIMKDFSHPNVLSLLGICLRSEGSPLVVLPYMKHGDLRNFIRNETHNPTVKDLIGFGLQVAKGMKYLASKKFVHRDLAARNCMLDENFTVKVADFGLARDVYDKEYYSVHNKTGAKLPVKWMALESLQTQKFTTKSDVWSFGVLLWELMTRGAPPYPDVNTFDITVYLLQGRRLLQPEYCPDHLYEVMLKCWHPKAEQRPSFAELVSRISAIFSAFIGEHYVHVNATYVNVKCVAPYPCLLSSQDHVDGEGDT.

An N-terminal signal peptide occupies residues 1 to 24 (MKALAVLGPGLLVHLLTLVQKSGG). At 25–932 (ECKEALVKSA…VIVQPDQNFT (908 aa)) the chain is on the extracellular side. One can recognise a Sema domain in the interval 27-515 (KEALVKSAMN…TGKTITKIPL (489 aa)). Asn45 and Asn74 each carry an N-linked (GlcNAc...) asparagine glycan. Intrachain disulfides connect Cys95–Cys101, Cys98–Cys159, Cys133–Cys141, Cys172–Cys175, Cys298–Cys363, and Cys385–Cys397. N-linked (GlcNAc...) asparagine glycosylation occurs at Asn106. N-linked (GlcNAc...) asparagine glycosylation is present at Asn358. The N-linked (GlcNAc...) asparagine glycan is linked to Asn399. 4 disulfide bridges follow: Cys520-Cys538, Cys526-Cys561, Cys529-Cys545, and Cys541-Cys551. 3 consecutive IPT/TIG domains span residues 563–655 (PTIY…FSYV), 657–739 (PIIT…FNYR), and 742–836 (PIVD…LIYV). The O-linked (Man) threonine glycan is linked to Thr582. Asn607 and Asn635 each carry an N-linked (GlcNAc...) asparagine glycan. O-linked (Man) threonine glycosylation is found at Thr676 and Thr761. Asn785, Asn879, and Asn930 each carry an N-linked (GlcNAc...) asparagine glycan. Residues 933–955 (GLIVGVISISVLLSLLFGLFLWL) traverse the membrane as a helical segment. Over 956–1381 (KRRKQIKDLG…QDHVDGEGDT (426 aa)) the chain is Cytoplasmic. Phosphoserine is present on Ser966. Thr977 is modified (phosphothreonine). Phosphoserine is present on residues Ser990, Ser997, and Ser1000. Tyr1003 bears the Phosphotyrosine mark. The Protein kinase domain maps to 1078-1345 (VHFNEVIGRG…RISAIFSAFI (268 aa)). ATP contacts are provided by residues 1084-1092 (IGRGHFGCV) and Lys1110. The active-site Proton acceptor is the Asp1204. The interaction with RANBP9 stretch occupies residues 1212 to 1381 (LDENFTVKVA…QDHVDGEGDT (170 aa)). Tyr1230 is modified (phosphotyrosine). Residues Tyr1234 and Tyr1235 each carry the phosphotyrosine; by autocatalysis modification. A Phosphothreonine modification is found at Thr1289. Residues 1320–1359 (WHPKAEQRPSFAELVSRISAIFSAFIGEHYVHVNATYVNV) form an interaction with MUC20 region. Tyr1349 and Tyr1356 each carry phosphotyrosine; by autocatalysis. Position 1365 is a phosphotyrosine (Tyr1365).

The protein belongs to the protein kinase superfamily. Tyr protein kinase family. Heterodimer made of an alpha chain (50 kDa) and a beta chain (145 kDa) which are disulfide linked. Binds PLXNB1. Interacts when phosphorylated with downstream effectors including STAT3, PIK3R1, SRC, PCLG1, GRB2 and GAB1. Interacts with SPSB1, SPSB2 and SPSB4. Interacts with INPP5D/SHIP1. When phosphorylated at Tyr-1356, interacts with INPPL1/SHIP2. Interacts with RANBP9 and RANBP10, as well as SPSB1, SPSB2, SPSB3 and SPSB4. SPSB1 binding occurs in the presence and in the absence of HGF, however HGF treatment has a positive effect on this interaction. Interacts with MUC20; prevents interaction with GRB2 and suppresses hepatocyte growth factor-induced cell proliferation. Interacts with GRB10. Interacts with PTPN1 and PTPN2. Interacts with HSP90AA1 and HSP90AB1; the interaction suppresses MET kinase activity. Interacts with tensin TNS3. Interacts (when phosphorylated) with tensin TNS4 (via SH2 domain); the interaction increases MET protein stability by inhibiting MET endocytosis and subsequent lysosomal degradation. Autophosphorylated in response to ligand binding on Tyr-1234 and Tyr-1235 in the kinase domain leading to further phosphorylation of Tyr-1349 and Tyr-1356 in the C-terminal multifunctional docking site. Dephosphorylated by PTPRJ at Tyr-1349 and Tyr-1365. Dephosphorylated by PTPN1 and PTPN2. Post-translationally, ubiquitinated. Ubiquitination by CBL regulates the receptor stability and activity through proteasomal degradation. In terms of processing, O-mannosylation of IPT/TIG domains by TMEM260 is required for protein maturation. O-mannosylated residues are composed of single mannose glycans that are not elongated or modified.

The protein localises to the membrane. The catalysed reaction is L-tyrosyl-[protein] + ATP = O-phospho-L-tyrosyl-[protein] + ADP + H(+). Its activity is regulated as follows. In its inactive state, the C-terminal tail interacts with the catalytic domain and inhibits the kinase activity. Upon ligand binding, the C-terminal tail is displaced and becomes phosphorylated, thus increasing the kinase activity. In terms of biological role, receptor tyrosine kinase that transduces signals from the extracellular matrix into the cytoplasm by binding to hepatocyte growth factor/HGF ligand. Regulates many physiological processes including proliferation, scattering, morphogenesis and survival. Ligand binding at the cell surface induces autophosphorylation of MET on its intracellular domain that provides docking sites for downstream signaling molecules. Following activation by ligand, interacts with the PI3-kinase subunit PIK3R1, PLCG1, SRC, GRB2, STAT3 or the adapter GAB1. Recruitment of these downstream effectors by MET leads to the activation of several signaling cascades including the RAS-ERK, PI3 kinase-AKT, or PLCgamma-PKC. The RAS-ERK activation is associated with the morphogenetic effects while PI3K/AKT coordinates prosurvival effects. During embryonic development, MET signaling plays a role in gastrulation, development and migration of muscles and neuronal precursors, angiogenesis and kidney formation. In adults, participates in wound healing as well as organ regeneration and tissue remodeling. Also promotes differentiation and proliferation of hematopoietic cells. This is Hepatocyte growth factor receptor (MET) from Rhinolophus ferrumequinum (Greater horseshoe bat).